Consider the following 251-residue polypeptide: Isoprenyl transferase (251 aa).

D31 is a catalytic residue. Residue D31 coordinates Mg(2+). Substrate is bound by residues 32–35 (GNGR), W36, R44, H48, and 76–78 (STE). The active-site Proton acceptor is the N79. Substrate is bound by residues W80, R82, R199, and 205-207 (RIS). E218 is a binding site for Mg(2+).

The protein belongs to the UPP synthase family. In terms of assembly, homodimer. The cofactor is Mg(2+).

Its function is as follows. Catalyzes the condensation of isopentenyl diphosphate (IPP) with allylic pyrophosphates generating different type of terpenoids. The polypeptide is Isoprenyl transferase (Thermosynechococcus vestitus (strain NIES-2133 / IAM M-273 / BP-1)).